The following is an 86-amino-acid chain: Small ribosomal subunit protein bS16 (86 aa).

Belongs to the bacterial ribosomal protein bS16 family.

This is Small ribosomal subunit protein bS16 from Methylacidiphilum infernorum (isolate V4) (Methylokorus infernorum (strain V4)).